The following is a 261-amino-acid chain: 3-methyl-2-oxobutanoate hydroxymethyltransferase (261 aa).

Asp44 and Asp83 together coordinate Mg(2+). 3-methyl-2-oxobutanoate contacts are provided by residues 44–45 (DS), Asp83, and Lys113. Residue Glu115 coordinates Mg(2+). Glu183 (proton acceptor) is an active-site residue.

It belongs to the PanB family. Homodecamer; pentamer of dimers. Mg(2+) is required as a cofactor.

It localises to the cytoplasm. It catalyses the reaction 3-methyl-2-oxobutanoate + (6R)-5,10-methylene-5,6,7,8-tetrahydrofolate + H2O = 2-dehydropantoate + (6S)-5,6,7,8-tetrahydrofolate. Its pathway is cofactor biosynthesis; (R)-pantothenate biosynthesis; (R)-pantoate from 3-methyl-2-oxobutanoate: step 1/2. Its function is as follows. Catalyzes the reversible reaction in which hydroxymethyl group from 5,10-methylenetetrahydrofolate is transferred onto alpha-ketoisovalerate to form ketopantoate. The sequence is that of 3-methyl-2-oxobutanoate hydroxymethyltransferase from Cyanothece sp. (strain PCC 7425 / ATCC 29141).